We begin with the raw amino-acid sequence, 365 residues long: Eukaryotic translation initiation factor 3 subunit H (365 aa).

The 150-residue stretch at 11–160 folds into the MPN domain; sequence VKVEALVVMK…LRAFRLSPKF (150 aa).

This sequence belongs to the eIF-3 subunit H family. Component of the eukaryotic translation initiation factor 3 (eIF-3) complex.

Its subcellular location is the cytoplasm. Component of the eukaryotic translation initiation factor 3 (eIF-3) complex, which is involved in protein synthesis of a specialized repertoire of mRNAs and, together with other initiation factors, stimulates binding of mRNA and methionyl-tRNAi to the 40S ribosome. The eIF-3 complex specifically targets and initiates translation of a subset of mRNAs involved in cell proliferation. In Aspergillus fumigatus (strain CBS 144.89 / FGSC A1163 / CEA10) (Neosartorya fumigata), this protein is Eukaryotic translation initiation factor 3 subunit H.